Consider the following 460-residue polypeptide: Serine--tRNA ligase (460 aa).

Residue 255–257 participates in L-serine binding; the sequence is TAE. ATP-binding positions include 286–288 and valine 302; that span reads RKE. Residue glutamate 309 coordinates L-serine. 373–376 is an ATP binding site; that stretch reads EMVS. Threonine 409 is an L-serine binding site.

This sequence belongs to the class-II aminoacyl-tRNA synthetase family. Type-1 seryl-tRNA synthetase subfamily. Homodimer. The tRNA molecule binds across the dimer.

Its subcellular location is the cytoplasm. It carries out the reaction tRNA(Ser) + L-serine + ATP = L-seryl-tRNA(Ser) + AMP + diphosphate + H(+). It catalyses the reaction tRNA(Sec) + L-serine + ATP = L-seryl-tRNA(Sec) + AMP + diphosphate + H(+). It participates in aminoacyl-tRNA biosynthesis; selenocysteinyl-tRNA(Sec) biosynthesis; L-seryl-tRNA(Sec) from L-serine and tRNA(Sec): step 1/1. In terms of biological role, catalyzes the attachment of serine to tRNA(Ser). Is also able to aminoacylate tRNA(Sec) with serine, to form the misacylated tRNA L-seryl-tRNA(Sec), which will be further converted into selenocysteinyl-tRNA(Sec). This Hyperthermus butylicus (strain DSM 5456 / JCM 9403 / PLM1-5) protein is Serine--tRNA ligase.